We begin with the raw amino-acid sequence, 652 residues long: Acetyl-coenzyme A synthetase (652 aa).

CoA contacts are provided by residues R193–K196 and T312. ATP-binding positions include G388–P390, D412–T417, D501, and R516. S524 is a binding site for CoA. Mg(2+) contacts are provided by V538, H540, and V543. Residue K611 is modified to N6-acetyllysine.

It belongs to the ATP-dependent AMP-binding enzyme family. Requires Mg(2+) as cofactor. Acetylated. Deacetylation by the SIR2-homolog deacetylase activates the enzyme.

It carries out the reaction acetate + ATP + CoA = acetyl-CoA + AMP + diphosphate. Its function is as follows. Catalyzes the conversion of acetate into acetyl-CoA (AcCoA), an essential intermediate at the junction of anabolic and catabolic pathways. AcsA undergoes a two-step reaction. In the first half reaction, AcsA combines acetate with ATP to form acetyl-adenylate (AcAMP) intermediate. In the second half reaction, it can then transfer the acetyl group from AcAMP to the sulfhydryl group of CoA, forming the product AcCoA. The protein is Acetyl-coenzyme A synthetase of Streptomyces avermitilis (strain ATCC 31267 / DSM 46492 / JCM 5070 / NBRC 14893 / NCIMB 12804 / NRRL 8165 / MA-4680).